The sequence spans 179 residues: Large ribosomal subunit protein uL6 (179 aa).

It belongs to the universal ribosomal protein uL6 family. As to quaternary structure, part of the 50S ribosomal subunit.

Its function is as follows. This protein binds to the 23S rRNA, and is important in its secondary structure. It is located near the subunit interface in the base of the L7/L12 stalk, and near the tRNA binding site of the peptidyltransferase center. This is Large ribosomal subunit protein uL6 from Bifidobacterium longum subsp. infantis (strain ATCC 15697 / DSM 20088 / JCM 1222 / NCTC 11817 / S12).